A 465-amino-acid chain; its full sequence is Mitochondrial-processing peptidase subunit beta (465 aa).

Position 79 (H79) interacts with Zn(2+). E82 serves as the catalytic Proton acceptor. H83 and E159 together coordinate Zn(2+).

It belongs to the peptidase M16 family. Heterodimer of an alpha subunit and a beta subunit subunits, forming the mitochondrial processing protease (MPP) in which the alpha subunit is involved in substrate recognition and binding and the beta subunit is the catalytic subunit. Requires Zn(2+) as cofactor.

Its subcellular location is the mitochondrion matrix. The enzyme catalyses Release of N-terminal transit peptides from precursor proteins imported into the mitochondrion, typically with Arg in position P2.. Its activity is regulated as follows. Binding to the alpha subunit is required for catalytic activity. Its function is as follows. Catalytic subunit of the essential mitochondrial processing protease (MPP), which cleaves the mitochondrial sequence off newly imported precursors proteins. Preferentially, cleaves after an arginine at position P2. This chain is Mitochondrial-processing peptidase subunit beta (MPP1), found in Blastocladiella emersonii (Aquatic fungus).